A 412-amino-acid polypeptide reads, in one-letter code: BSD domain-containing protein 1 (412 aa).

The BSD domain occupies 145–197 (WLSTFSLEERKAEISELLVSSPAIRALYTKMVPAAVAHAEFWQRYFYKVFQLE). Over residues 208–217 (QRAEQTDHSE) the composition is skewed to basic and acidic residues. Disordered regions lie at residues 208-227 (QRAE…EDEE), 253-272 (VTVA…ASLS), and 298-412 (ESVT…ENWE). Composition is skewed to polar residues over residues 259–272 (PESS…ASLS) and 298–308 (ESVTIRVTQPS). Serine 308 is subject to Phosphoserine. Basic and acidic residues predominate over residues 328-349 (PEERPAPREETAREDMAQDLRV). Residues 353–372 (NSDSGKSTPSNNGKKGSSTD) are compositionally biased toward polar residues. 2 stretches are compositionally biased toward acidic residues: residues 373–390 (VSED…EEEV) and 400–412 (TEEL…ENWE).

The sequence is that of BSD domain-containing protein 1 (bsdc1) from Danio rerio (Zebrafish).